A 151-amino-acid chain; its full sequence is Arginine repressor (151 aa).

The protein belongs to the ArgR family.

The protein resides in the cytoplasm. It functions in the pathway amino-acid biosynthesis; L-arginine biosynthesis [regulation]. In terms of biological role, regulates arginine biosynthesis genes. The sequence is that of Arginine repressor from Haemophilus influenzae (strain PittGG).